The sequence spans 329 residues: Isopentenyl-diphosphate delta-isomerase (329 aa).

A substrate-binding site is contributed by 4 to 5 (RK). FMN contacts are provided by residues 59–61 (AMT), S89, and N116. Q146 contacts substrate. E147 contributes to the Mg(2+) binding site. Residues K178, S203, T208, 252–254 (GVR), and 273–274 (SR) contribute to the FMN site.

Belongs to the IPP isomerase type 2 family. Homooctamer. Dimer of tetramers. FMN is required as a cofactor. NADPH serves as cofactor. It depends on Mg(2+) as a cofactor.

The protein localises to the cytoplasm. The enzyme catalyses isopentenyl diphosphate = dimethylallyl diphosphate. Its function is as follows. Involved in the biosynthesis of isoprenoids. Catalyzes the 1,3-allylic rearrangement of the homoallylic substrate isopentenyl (IPP) to its allylic isomer, dimethylallyl diphosphate (DMAPP). In Streptococcus pyogenes serotype M28 (strain MGAS6180), this protein is Isopentenyl-diphosphate delta-isomerase.